Reading from the N-terminus, the 183-residue chain is Large ribosomal subunit protein uL6 (183 aa).

This sequence belongs to the universal ribosomal protein uL6 family. As to quaternary structure, part of the 50S ribosomal subunit.

Its function is as follows. This protein binds to the 23S rRNA, and is important in its secondary structure. It is located near the subunit interface in the base of the L7/L12 stalk, and near the tRNA binding site of the peptidyltransferase center. The protein is Large ribosomal subunit protein uL6 of Chlamydia trachomatis serovar L2 (strain ATCC VR-902B / DSM 19102 / 434/Bu).